We begin with the raw amino-acid sequence, 730 residues long: Elongation factor 2 (730 aa).

The tr-type G domain occupies 19–229; sequence DYIRNIGIVA…NITFKDIIQY (211 aa). Residues 28–35, 94–98, and 148–151 each bind GTP; these read AHIDHGKT, DTPGH, and NKVD. Histidine 597 carries the post-translational modification Diphthamide.

The protein belongs to the TRAFAC class translation factor GTPase superfamily. Classic translation factor GTPase family. EF-G/EF-2 subfamily.

Its subcellular location is the cytoplasm. Its function is as follows. Catalyzes the GTP-dependent ribosomal translocation step during translation elongation. During this step, the ribosome changes from the pre-translocational (PRE) to the post-translocational (POST) state as the newly formed A-site-bound peptidyl-tRNA and P-site-bound deacylated tRNA move to the P and E sites, respectively. Catalyzes the coordinated movement of the two tRNA molecules, the mRNA and conformational changes in the ribosome. The protein is Elongation factor 2 of Methanosphaera stadtmanae (strain ATCC 43021 / DSM 3091 / JCM 11832 / MCB-3).